The sequence spans 69 residues: Toxin Lc b (69 aa).

4 disulfides stabilise this stretch: Cys3/Cys20, Cys13/Cys41, Cys45/Cys56, and Cys57/Cys62.

Belongs to the three-finger toxin family. Long-chain subfamily. Type II alpha-neurotoxin sub-subfamily. As to expression, expressed by the venom gland.

The protein resides in the secreted. In terms of biological role, binds with high affinity to muscular nicotinic acetylcholine receptors (nAChRs), whereas it binds with a low affinity to neuronal alpha-7/CHRNA7 nAChRs. This Laticauda colubrina (Yellow-lipped sea krait) protein is Toxin Lc b.